The primary structure comprises 147 residues: Putative pre-16S rRNA nuclease (147 aa).

It belongs to the YqgF nuclease family.

The protein resides in the cytoplasm. Could be a nuclease involved in processing of the 5'-end of pre-16S rRNA. This chain is Putative pre-16S rRNA nuclease, found in Ureaplasma parvum serovar 3 (strain ATCC 27815 / 27 / NCTC 11736).